The chain runs to 576 residues: MQPQEVDLMENSTMRNGARVLPPEAISKRHIGPYIIRETLGEGSFGKVKLATHYKTQQKVALKFISRQLLKKSDMHMRVEREISYLKLLRHPHIIKLYDVITTPTDIVMVIEYAGGELFDYIVEKKRMTEDEGRRFFQQIICAIEYCHRHKIVHRDLKPENLLLDDNLNVKIADFGLSNIMTDGNFLKTSCGSPNYAAPEVINGKLYAGPEVDVWSCGIVLYVMLVGRLPFDDEFIPNLFKKVNSCVYVMPDFLSPGAQSLIRRMIVADPMQRITIQEIRRDPWFNVNLPDYLRPMEEVQGSYADSRIVSKLGEAMGFSEDYIVEALRSDENNEVKEAYNLLHENQVIQEKSHLSKSKRVDSFLSVSPPAFSEYTSELQKKSKQELIDPTLEGPRWTVSDPPTYAKQTIDSNICVLVPTAEKNKLEMRTLADAASAVDTSQSTRKKSRRNKWHFGVRCRGDAPEILLAVYRALQRAGAQFTVPKPVNGKYRSDMYTIKSRWEIPHCKREGKNTYAYIELQLYEVMPGCFMLDVKSNGYKDIYSHPERTADHGMDDLKSSFPFLDLCAMLVCKLFSA.

In terms of domain architecture, Protein kinase spans 34-285; it reads YIIRETLGEG…IQEIRRDPWF (252 aa). Residues 40–48 and Lys63 each bind ATP; that span reads LGEGSFGKV. Residue Asp156 is the Proton acceptor of the active site. Thr189 is modified (phosphothreonine). Positions 292 to 348 are auto-inhibitory domain (AID); the sequence is YLRPMEEVQGSYADSRIVSKLGEAMGFSEDYIVEALRSDENNEVKEAYNLLHENQVI. A UBA domain is found at 304-345; the sequence is ADSRIVSKLGEAMGFSEDYIVEALRSDENNEVKEAYNLLHEN. Ser442 is subject to Phosphoserine.

This sequence belongs to the protein kinase superfamily. CAMK Ser/Thr protein kinase family. SNF1 subfamily. Component of the AMP-activated protein kinase complex also known as the SNF1 kinase complex (Snf1c), a heterotrimeric complex composed of a catalytic subunit alpha and 2 regulatory subunits beta (amk2) and gamma (cbs2). Phosphorylation at Thr-189 by ssp1 is required for nuclear entry in nutritionally stressed cells.

Its subcellular location is the cytoplasm. It localises to the nucleus. It catalyses the reaction L-seryl-[protein] + ATP = O-phospho-L-seryl-[protein] + ADP + H(+). The catalysed reaction is L-threonyl-[protein] + ATP = O-phospho-L-threonyl-[protein] + ADP + H(+). Serine/threonine protein kinase essential for release from glucose repression via the phosphorylation of scr1 upon glucose deprivation. Catalytic subunit of the AMP-activated protein kinase complex also known as the SNF1 kinase complex (Snf1c), a central regulator of cellular energy homeostasis, which, in response to a fall in intracellular ATP levels, activates energy-producing pathways and inhibits energy-consuming processes. The complex phosphorylates histone H3 to form H3S10ph, which promotes H3K14ac formation, leading to transcriptional activation through TBP recruitment to the promoters. Regulates proper cell cycle exit and sexual differentiation. Also regulates ste11 levels under nitrogen deprivation. The sequence is that of SNF1-like protein kinase ssp2 from Schizosaccharomyces pombe (strain 972 / ATCC 24843) (Fission yeast).